We begin with the raw amino-acid sequence, 379 residues long: Protein COS2 (379 aa).

Residues 1–72 are Cytoplasmic-facing; it reads MKENELKNEK…WKLSNNCIYP (72 aa). A helical transmembrane segment spans residues 73-93; the sequence is LIVSLLVLFLGPIFVLVICGL. Residues 94–254 lie on the Extracellular side of the membrane; sequence SRKRSLSKQL…FLCCIYVSRG (161 aa). Residues 255 to 275 traverse the membrane as a helical segment; it reads MCLLLRTLYLGWILFMLVQGF. The Cytoplasmic segment spans residues 276-379; it reads QNIRVLIMSM…QLSRSEVLLV (104 aa).

It belongs to the DUP/COS family.

Its subcellular location is the membrane. The protein is Protein COS2 (COS2) of Saccharomyces cerevisiae (strain ATCC 204508 / S288c) (Baker's yeast).